The sequence spans 2083 residues: Centriole proteome protein 16 (2083 aa).

The tract at residues 205–333 (DAPTMDFMPP…PAVPPPLSPS (129 aa)) is disordered. Residues 227–245 (TAETADTAGAAGRKSLSGA) are compositionally biased toward low complexity. Gly residues predominate over residues 246–258 (SAGGAGPAKGGAK). Composition is skewed to low complexity over residues 259 to 274 (AGAA…SAGA) and 283 to 292 (GSTAGAATPG). Acidic residues predominate over residues 302–315 (GEEDFEDDLSEDLD). Residues 319–331 (PLPPSPAVPPPLS) show a composition bias toward pro residues. WD repeat units lie at residues 482–523 (GHTA…CLAI), 526–569 (AHAS…AAGG), 579–620 (ATEY…GTSV), 689–726 (LHAA…YLLE), 728–767 (EHEG…YTTL), 770–809 (SHCG…QLYE), 812–853 (APGE…LLQE), 856–895 (QHRA…APAQ), 990–1029 (VSPL…ALRG), and 1041–1079 (GHPS…MQQE). Disordered stretches follow at residues 1113-1141 (HTQA…VASA) and 1225-1276 (ALVV…PPPP). Residues 1263 to 1276 (VPLPPSPQPLPPPP) are compositionally biased toward pro residues. WD repeat units follow at residues 1326–1365 (GHNR…RAAQ), 1403–1444 (YHPL…LVAA), 1448–1486 (EQSP…LEQR), 1497–1539 (RDPR…QPPQ), 1651–1691 (GQAA…AEPA), 1736–1781 (DPLD…QLSW), and 1785–1824 (RHPA…LVSY). The interval 1713–1743 (APAHTLRHPPSAAPSSAASSSPLDPLDPLPA) is disordered. Residues 1720–1743 (HPPSAAPSSAASSSPLDPLDPLPA) are compositionally biased toward low complexity. Positions 1832-1870 (GPTPHSPGGTGRRSPRGAASPPPAPPRPGTGPLQAMAVS) are disordered. Positions 1851–1860 (SPPPAPPRPG) are enriched in pro residues. The WD 18 repeat unit spans residues 2035-2073 (GHAGAVAAASYTGDGGHAVTASGSVLMVWDAAQLLKGVT).

The protein belongs to the WD repeat WDR90/POC16 family.

It is found in the cytoplasm. Its subcellular location is the cytoskeleton. It localises to the microtubule organizing center. The protein resides in the centrosome. The protein localises to the centriole. In terms of biological role, required for flagellum assembly and/or maintenance. In Chlamydomonas reinhardtii (Chlamydomonas smithii), this protein is Centriole proteome protein 16.